The chain runs to 579 residues: Proteasome-associated ATPase (579 aa).

Positions 1–21 are disordered; sequence MPRDETPEREHAEQQSRQALE. Positions 8-86 form a coiled coil; that stretch reads EREHAEQQSR…REEVEKLTQP (79 aa). 268–273 serves as a coordination point for ATP; it reads GCGKTL. Residues 578-579 form a docks into pockets in the proteasome alpha-ring region; that stretch reads YL.

The protein belongs to the AAA ATPase family. As to quaternary structure, homohexamer. Assembles into a hexameric ring structure that caps the 20S proteasome core. Strongly interacts with the prokaryotic ubiquitin-like protein Pup through a hydrophobic interface; the interacting region of ARC lies in its N-terminal coiled-coil domain. There is one Pup binding site per ARC hexamer ring. Upon ATP-binding, the C-terminus of ARC interacts with the alpha-rings of the proteasome core, possibly by binding to the intersubunit pockets.

It functions in the pathway protein degradation; proteasomal Pup-dependent pathway. Its function is as follows. ATPase which is responsible for recognizing, binding, unfolding and translocation of pupylated proteins into the bacterial 20S proteasome core particle. May be essential for opening the gate of the 20S proteasome via an interaction with its C-terminus, thereby allowing substrate entry and access to the site of proteolysis. Thus, the C-termini of the proteasomal ATPase may function like a 'key in a lock' to induce gate opening and therefore regulate proteolysis. This chain is Proteasome-associated ATPase, found in Acidimicrobium ferrooxidans (strain DSM 10331 / JCM 15462 / NBRC 103882 / ICP).